We begin with the raw amino-acid sequence, 149 residues long: Deoxyuridine 5'-triphosphate nucleotidohydrolase (149 aa).

Substrate is bound by residues 70–72 (RSG), N83, and 87–89 (LID).

Belongs to the dUTPase family. The cofactor is Mg(2+).

The catalysed reaction is dUTP + H2O = dUMP + diphosphate + H(+). It functions in the pathway pyrimidine metabolism; dUMP biosynthesis; dUMP from dCTP (dUTP route): step 2/2. Its function is as follows. This enzyme is involved in nucleotide metabolism: it produces dUMP, the immediate precursor of thymidine nucleotides and it decreases the intracellular concentration of dUTP so that uracil cannot be incorporated into DNA. This chain is Deoxyuridine 5'-triphosphate nucleotidohydrolase, found in Blochmanniella pennsylvanica (strain BPEN).